A 380-amino-acid chain; its full sequence is Sterol 24-C-methyltransferase ERG6B (380 aa).

This sequence belongs to the class I-like SAM-binding methyltransferase superfamily. Erg6/SMT family.

The enzyme catalyses lanosterol + S-adenosyl-L-methionine = eburicol + S-adenosyl-L-homocysteine + H(+). It participates in steroid metabolism; ergosterol biosynthesis. Sterol 24-C-methyltransferase; part of the third module of ergosterol biosynthesis pathway that includes the late steps of the pathway. ERG6A and ERG6B methylate lanosterol at C-24 to produce eburicol. The third module or late pathway involves the ergosterol synthesis itself through consecutive reactions that mainly occur in the endoplasmic reticulum (ER) membrane. Firstly, the squalene synthase ERG9 catalyzes the condensation of 2 farnesyl pyrophosphate moieties to form squalene, which is the precursor of all steroids. Squalene synthase is crucial for balancing the incorporation of farnesyl diphosphate (FPP) into sterol and nonsterol isoprene synthesis. Secondly, squalene is converted into lanosterol by the consecutive action of the squalene epoxidase ERG1 and the lanosterol synthase ERG7. Then, the delta(24)-sterol C-methyltransferase ERG6 methylates lanosterol at C-24 to produce eburicol. Eburicol is the substrate of the sterol 14-alpha demethylase encoded by CYP51A, CYP51B and CYP51C, to yield 4,4,24-trimethyl ergosta-8,14,24(28)-trienol. CYP51B encodes the enzyme primarily responsible for sterol 14-alpha-demethylation, and plays an essential role in ascospore formation. CYP51A encodes an additional sterol 14-alpha-demethylase, induced on ergosterol depletion and responsible for the intrinsic variation in azole sensitivity. The third CYP51 isoform, CYP51C, does not encode a sterol 14-alpha-demethylase, but is required for full virulence on host wheat ears. The C-14 reductase ERG24 then reduces the C14=C15 double bond which leads to 4,4-dimethylfecosterol. A sequence of further demethylations at C-4, involving the C-4 demethylation complex containing the C-4 methylsterol oxidases ERG25, the sterol-4-alpha-carboxylate 3-dehydrogenase ERG26 and the 3-keto-steroid reductase ERG27, leads to the production of fecosterol via 4-methylfecosterol. ERG28 has a role as a scaffold to help anchor ERG25, ERG26 and ERG27 to the endoplasmic reticulum. The C-8 sterol isomerase ERG2 then catalyzes the reaction which results in unsaturation at C-7 in the B ring of sterols and thus converts fecosterol to episterol. The sterol-C5-desaturases ERG3A and ERG3BB then catalyze the introduction of a C-5 double bond in the B ring to produce 5-dehydroepisterol. The C-22 sterol desaturases ERG5A and ERG5B further convert 5-dehydroepisterol into ergosta-5,7,22,24(28)-tetraen-3beta-ol by forming the C-22(23) double bond in the sterol side chain. Finally, ergosta-5,7,22,24(28)-tetraen-3beta-ol is substrate of the C-24(28) sterol reductase ERG4 to produce ergosterol. In Gibberella zeae (strain ATCC MYA-4620 / CBS 123657 / FGSC 9075 / NRRL 31084 / PH-1) (Wheat head blight fungus), this protein is Sterol 24-C-methyltransferase ERG6B.